The sequence spans 113 residues: Flagellar hook-basal body complex protein FliE (113 aa).

This sequence belongs to the FliE family.

The protein resides in the bacterial flagellum basal body. The chain is Flagellar hook-basal body complex protein FliE from Burkholderia mallei (strain NCTC 10247).